The following is a 43-amino-acid chain: SPbeta prophage-derived uncharacterized protein YopG (43 aa).

In Bacillus subtilis (strain 168), this protein is SPbeta prophage-derived uncharacterized protein YopG (yopG).